A 157-amino-acid polypeptide reads, in one-letter code: 2-C-methyl-D-erythritol 2,4-cyclodiphosphate synthase (157 aa).

The a divalent metal cation site is built by aspartate 8 and histidine 10. 4-CDP-2-C-methyl-D-erythritol 2-phosphate is bound by residues 8 to 10 and 34 to 35; these read DVH and HS. Position 42 (histidine 42) interacts with a divalent metal cation. Residues 56–58, 61–65, 100–106, 132–135, phenylalanine 139, and arginine 142 contribute to the 4-CDP-2-C-methyl-D-erythritol 2-phosphate site; these read DIG, FPDTD, AQAPKMA, and TTTE.

The protein belongs to the IspF family. Homotrimer. It depends on a divalent metal cation as a cofactor.

It catalyses the reaction 4-CDP-2-C-methyl-D-erythritol 2-phosphate = 2-C-methyl-D-erythritol 2,4-cyclic diphosphate + CMP. It participates in isoprenoid biosynthesis; isopentenyl diphosphate biosynthesis via DXP pathway; isopentenyl diphosphate from 1-deoxy-D-xylulose 5-phosphate: step 4/6. Its function is as follows. Involved in the biosynthesis of isopentenyl diphosphate (IPP) and dimethylallyl diphosphate (DMAPP), two major building blocks of isoprenoid compounds. Catalyzes the conversion of 4-diphosphocytidyl-2-C-methyl-D-erythritol 2-phosphate (CDP-ME2P) to 2-C-methyl-D-erythritol 2,4-cyclodiphosphate (ME-CPP) with a corresponding release of cytidine 5-monophosphate (CMP). The polypeptide is 2-C-methyl-D-erythritol 2,4-cyclodiphosphate synthase (Edwardsiella ictaluri (strain 93-146)).